We begin with the raw amino-acid sequence, 673 residues long: Potassium voltage-gated channel subfamily KQT member 1 (673 aa).

Disordered stretches follow at residues 1–28 (MAAA…RGSA) and 61–80 (GPSS…LGPR). The Cytoplasmic portion of the chain corresponds to 1–118 (MAAATSPPRA…YNFLERPTGW (118 aa)). Position 27 is a phosphoserine (serine 27). Positions 66–75 (AAPAASPAAA) are enriched in low complexity. Residues 119 to 140 (KCFVYHFAVFLIVLVCLIFSVL) form a helical membrane-spanning segment. Topologically, residues 141 to 151 (STIEQYVALAT) are extracellular. Residues 152–174 (GTLFWMEIVLVVFFGTEYAVRLW) traverse the membrane as a helical segment. Topologically, residues 175 to 190 (SAGCRSKYVGIWGRLR) are cytoplasmic. Residues 191-216 (FARKPISIIDLIVVVASMVVLCVGSK) traverse the membrane as a helical segment. The Extracellular segment spans residues 217-224 (GQVFATSA). The chain crosses the membrane as a helical; Voltage-sensor span at residues 225–240 (IRGIRFLQILRMLHVD). An interaction with KCNE3 region spans residues 236–244 (MLHVDRQGG). Topologically, residues 241–258 (RQGGTWRLLGSVVFIHRQ) are cytoplasmic. Glutamine 242 contacts a 1,2-diacyl-sn-glycero-3-phospho-(1D-myo-inositol-4,5-bisphosphate). The helical transmembrane segment at 259–281 (ELITTLYIGFLGLIFSSYFVYLA) threads the bilayer. Residues 282–297 (EKDAVNESGQVEFGSY) are Extracellular-facing. Asparagine 287 carries N-linked (GlcNAc...) asparagine glycosylation. Positions 298 to 318 (ADALWWGVVTVTTIGYGDKVP) form an intramembrane region, pore-forming. Residues 319–320 (QT) lie on the Extracellular side of the membrane. Residues 321 to 346 (WVGKTIASCFSVFAISFFALPAGILG) traverse the membrane as a helical segment. The Cytoplasmic segment spans residues 347 to 673 (SGFALKVQQK…VPGRGPEEGS (327 aa)). Positions 368–380 (AAASLIQTAWRCY) are interaction with CALM. Phosphoserine occurs at positions 405 and 407. Residues 514 to 528 (KVIRRMQYFVAKKKF) are interaction with CALM; calcium-dependent. Residues 534 to 571 (PYDVRDVIEQYSQGHLNLMVRIKELQRRLDQSIGRPAL) are interaction with KCNE1 C-terminus. The interval 587–615 (IGARLNRVEDKVTQLDQRLELITDMLQQL) is interaction with AKAP9. Positions 588 to 619 (GARLNRVEDKVTQLDQRLELITDMLQQLLSLH) are C-terminal assembly domain (tetramerization). The disordered stretch occupies residues 619-673 (HRGGTPGSRAPGGGGAQVAQPCSGGSINPELFLPSNALPTYEQLTVPGRGPEEGS). The span at 622–634 (GTPGSRAPGGGGA) shows a compositional bias: gly residues.

It belongs to the potassium channel family. KQT (TC 1.A.1.15) subfamily. Kv7.1/KCNQ1 sub-subfamily. As to quaternary structure, tetramer. Heterotetramer with KCNE1; targets to the membrane raft. Interacts (via C-terminus) with CALM; forms a heterooctameric structure (with 4:4 KCNQ1:CALM stoichiometry) in a calcium-independent manner. Interacts with AKAP9; targets protein kinase A (PKA) catalytic and regulatory subunits and protein phosphatase 1 (PP1) to the KCNQ1-KCNE1 complex, allowing PKA-mediated phosphorylation and increase of delayed rectifier potassium channel activity. Interacts with KCNE2; form a heterooligomer complex that targets to the membrane raft and leading to currents with an apparently instantaneous activation, a rapid deactivation process and a linear current-voltage relationship and decreases the amplitude of the outward current. Interacts with AP2M1; mediates estrogen-induced internalization via clathrin-coated vesicles. Interacts with NEDD4L; promotes internalization and decreases I(Ks) currents. Interacts with USP2; counteracts the NEDD4L-specific down-regulation of I(Ks) and restore plasma membrane localization. Heterotetramer with KCNQ5; has a voltage-gated potassium channel activity. Interacts with KCNE3; four KCNE3 molecules are bound to one KCNQ1 tetramer (4:4 KCNQ1:KCNE3 stoichiometry); alters membrane raft localization; affects KCNQ1 structure and gating properties. Interacts with KCNE4; impairs KCNQ1 localization in lipid rafts and inhibits voltage-gated potassium channel activity. Interacts with KCNE5; impairs KCNQ1 localization in lipid rafts and only conducts current upon strong and continued depolarization. Interacts with SLC5A3; forms coregulatory channel-transporter complexes that modulate Na(+)-coupled myo-inositol influx through the transporter. Post-translationally, ubiquitinated by NEDD4L; promotes internalization. The ubiquitinylated form is internalized through a clathrin-mediated endocytosis by interacting with AP2M1 and is recycled back to the cell membrane via RAB4A and RAB11A. Deubiquitinated by USP2; counteracts the NEDD4L-specific down-regulation of I(Ks) and restores the membrane localization.

Its subcellular location is the cell membrane. It localises to the cytoplasmic vesicle membrane. It is found in the early endosome. The protein localises to the membrane raft. The protein resides in the endoplasmic reticulum. Its subcellular location is the basolateral cell membrane. It localises to the apical cell membrane. The catalysed reaction is K(+)(in) = K(+)(out). PIP2 molecule is essential to activate KCNQ channels by inducing the coupling of the voltage-sensing domain (VSD) and the pore-forming domain (PD). Upon channel activation, PIP2 disrupts the VSD-calmodulin/CALM interactions, causing the release of CALM from the VSD which triggers the opening of the gate. Calcium potentiates KCNQ1 channel current through calcium-bound CALM. Calcium-bound CALM competes with PIP2 to stabilize the channel open state. In terms of biological role, pore-forming subunit of the voltage-gated potassium (Kv) channel involved in the regulation of cardiomyocyte excitability and important in normal development and functions of myocardium, inner ear, stomach and colon. Associates with KCNE beta subunits that modulates current kinetics. Induces a voltage-dependent by rapidly activating and slowly deactivating potassium-selective outward current. Also promotes a delayed voltage activated potassium current showing outward rectification characteristic. During beta-adrenergic receptor stimulation participates in cardiac repolarization by associating with KCNE1 to form the I(Ks) cardiac potassium current that increases the amplitude and slows down the activation kinetics of outward potassium current I(Ks). Muscarinic agonist oxotremorine-M strongly suppresses KCNQ1/KCNE1 current. When associated with KCNE3, forms the potassium channel that is important for cyclic AMP-stimulated intestinal secretion of chloride ions. This interaction with KCNE3 is reduced by 17beta-estradiol, resulting in the reduction of currents. During conditions of increased substrate load, maintains the driving force for proximal tubular and intestinal sodium ions absorption, gastric acid secretion, and cAMP-induced jejunal chloride ions secretion. Allows the provision of potassium ions to the luminal membrane of the secretory canaliculus in the resting state as well as during stimulated acid secretion. When associated with KCNE2, forms a heterooligomer complex leading to currents with an apparently instantaneous activation, a rapid deactivation process and a linear current-voltage relationship and decreases the amplitude of the outward current. When associated with KCNE4, inhibits voltage-gated potassium channel activity. When associated with KCNE5, this complex only conducts current upon strong and continued depolarization. Also forms a heterotetramer with KCNQ5 that has a voltage-gated potassium channel activity. Binds with phosphatidylinositol 4,5-bisphosphate. KCNQ1-KCNE2 channel associates with Na(+)-coupled myo-inositol symporter in the apical membrane of choroid plexus epithelium and regulates the myo-inositol gradient between blood and cerebrospinal fluid with an impact on neuron excitability. The sequence is that of Potassium voltage-gated channel subfamily KQT member 1 from Sus scrofa (Pig).